Reading from the N-terminus, the 159-residue chain is ATP synthase subunit b 2 (159 aa).

A helical membrane pass occupies residues 1 to 21 (MDATFWAFIALVIFVAIVVYM).

The protein belongs to the ATPase B chain family. F-type ATPases have 2 components, F(1) - the catalytic core - and F(0) - the membrane proton channel. F(1) has five subunits: alpha(3), beta(3), gamma(1), delta(1), epsilon(1). F(0) has three main subunits: a(1), b(2) and c(10-14). The alpha and beta chains form an alternating ring which encloses part of the gamma chain. F(1) is attached to F(0) by a central stalk formed by the gamma and epsilon chains, while a peripheral stalk is formed by the delta and b chains.

It is found in the cell inner membrane. Its function is as follows. F(1)F(0) ATP synthase produces ATP from ADP in the presence of a proton or sodium gradient. F-type ATPases consist of two structural domains, F(1) containing the extramembraneous catalytic core and F(0) containing the membrane proton channel, linked together by a central stalk and a peripheral stalk. During catalysis, ATP synthesis in the catalytic domain of F(1) is coupled via a rotary mechanism of the central stalk subunits to proton translocation. Functionally, component of the F(0) channel, it forms part of the peripheral stalk, linking F(1) to F(0). In Brucella ovis (strain ATCC 25840 / 63/290 / NCTC 10512), this protein is ATP synthase subunit b 2.